The primary structure comprises 203 residues: DNA-directed RNA polymerase subunit gamma (203 aa).

Residues cysteine 34, cysteine 36, cysteine 49, and cysteine 52 each coordinate Zn(2+).

The protein belongs to the RNA polymerase beta' chain family. RpoC1 subfamily. As to quaternary structure, in cyanobacteria the RNAP catalytic core is composed of 2 alpha, 1 beta, 1 beta', 1 gamma and 1 omega subunit. When a sigma factor is associated with the core the holoenzyme is formed, which can initiate transcription. Zn(2+) is required as a cofactor.

It catalyses the reaction RNA(n) + a ribonucleoside 5'-triphosphate = RNA(n+1) + diphosphate. Functionally, DNA-dependent RNA polymerase catalyzes the transcription of DNA into RNA using the four ribonucleoside triphosphates as substrates. This is DNA-directed RNA polymerase subunit gamma (rpoC1) from Fischerella muscicola.